A 511-amino-acid polypeptide reads, in one-letter code: Cytochrome P450 monooxyhenase eriC (511 aa).

A helical membrane pass occupies residues 2 to 22; the sequence is VLADFISIPTVSIACLAVLGI. C445 contacts heme.

It belongs to the cytochrome P450 family. Heme is required as a cofactor.

It localises to the membrane. The enzyme catalyses erinacol + reduced [NADPH--hemoprotein reductase] + O2 = cyathadiol + oxidized [NADPH--hemoprotein reductase] + H2O + H(+). It functions in the pathway secondary metabolite biosynthesis. In terms of biological role, cytochrome P450 monooxygenase; part of the gene cluster that mediates the biosynthesis of erinacines, cyathane-xylosides that show unique biological activities, including leishmanicidal activity, stimulating activity for nerve growth-factor synthesis, and agonistic activity toward the kappa opioid receptor. Within the pathway, eriC hydroxylates erinacol at C-15 of the seven-membered ring to yield cyathadiol. The first step of the erinacines biosynthesis pathway is catalyzed by the geranylgeranyl diphosphate (GGPP) synthase eriE via conversion of farnesyl pyrophosphate and isopentyl pyrophosphate into geranylgeranyl pyrophosphate (GGPP). GGPP is then substrate of the diterpene cyclase eriG for the production of cyatha-3,12-diene. The cytochrome P450 monooxygenase eriI then hydroxylates cyatha-3,12-diene at C-14 of the seven-membered ring to produce erinacol, which is further hydroxylated at C-15 by the cytochrome P450 monooxygenase eriC to yield cyathadiol. The cytochrome P450 monooxygenase eriA then catalyzes C-11 hydroxylation in the presence of the short chain dehydrogenase/reductase (SDR) eriH, which leads to the production of cyathatriol. The acetyltransferase eriL converts cyathatriol into 11-O-acetyl-cyathatriol. The SDR eriH catalyzes further oxidation of 11-O-acetyl-cyathatriol into 1-O-acetylcyathin A3. Finally, the glycosyl transferase eriJ tranfers xylose from UDP-xylose onto C-14 of 11-O-acetyl-cyathatriol to form eracine Q. EriJ is also able to convert 11-O-acetyl-cyathatriol to eracine Q2 by using UDP-D-glucose as cosubstrate, but at a lower rate. The sequence is that of Cytochrome P450 monooxyhenase eriC from Hericium erinaceus (Lion's mane mushroom).